Reading from the N-terminus, the 199-residue chain is Imidazole glycerol phosphate synthase subunit HisH (199 aa).

Residues 2-199 form the Glutamine amidotransferase type-1 domain; sequence RAVIIDYGVG…LTNVYRWLRK (198 aa). Cys76 acts as the Nucleophile in catalysis. Residues His178 and Glu180 contribute to the active site.

As to quaternary structure, heterodimer of HisH and HisF.

The protein localises to the cytoplasm. It carries out the reaction 5-[(5-phospho-1-deoxy-D-ribulos-1-ylimino)methylamino]-1-(5-phospho-beta-D-ribosyl)imidazole-4-carboxamide + L-glutamine = D-erythro-1-(imidazol-4-yl)glycerol 3-phosphate + 5-amino-1-(5-phospho-beta-D-ribosyl)imidazole-4-carboxamide + L-glutamate + H(+). The catalysed reaction is L-glutamine + H2O = L-glutamate + NH4(+). The protein operates within amino-acid biosynthesis; L-histidine biosynthesis; L-histidine from 5-phospho-alpha-D-ribose 1-diphosphate: step 5/9. Its function is as follows. IGPS catalyzes the conversion of PRFAR and glutamine to IGP, AICAR and glutamate. The HisH subunit catalyzes the hydrolysis of glutamine to glutamate and ammonia as part of the synthesis of IGP and AICAR. The resulting ammonia molecule is channeled to the active site of HisF. The sequence is that of Imidazole glycerol phosphate synthase subunit HisH from Sulfolobus acidocaldarius (strain ATCC 33909 / DSM 639 / JCM 8929 / NBRC 15157 / NCIMB 11770).